The sequence spans 555 residues: Glucose-6-phosphate isomerase (555 aa).

Residues 169-170 (GS), 219-224 (SKTFTT), Gln-364, Glu-368, His-399, and Lys-521 each bind D-glucose 6-phosphate. The active-site Proton donor is Glu-368. Active-site residues include His-399 and Lys-521.

This sequence belongs to the GPI family. In terms of assembly, homodimer.

The protein resides in the cytoplasm. The protein localises to the cytosol. The catalysed reaction is alpha-D-glucose 6-phosphate = beta-D-fructose 6-phosphate. The protein operates within carbohydrate degradation; glycolysis; D-glyceraldehyde 3-phosphate and glycerone phosphate from D-glucose: step 2/4. Its function is as follows. In the cytoplasm, catalyzes the conversion of glucose-6-phosphate to fructose-6-phosphate, the second step in glycolysis, and the reverse reaction during gluconeogenesis. The chain is Glucose-6-phosphate isomerase (PGI1) from Candida glabrata (strain ATCC 2001 / BCRC 20586 / JCM 3761 / NBRC 0622 / NRRL Y-65 / CBS 138) (Yeast).